We begin with the raw amino-acid sequence, 439 residues long: Homogentisate 1,2-dioxygenase (439 aa).

Fe cation-binding residues include H335, E341, and H371.

The protein belongs to the homogentisate dioxygenase family. It depends on Fe cation as a cofactor.

The enzyme catalyses homogentisate + O2 = 4-maleylacetoacetate + H(+). Its pathway is amino-acid degradation; L-phenylalanine degradation; acetoacetate and fumarate from L-phenylalanine: step 4/6. The protein is Homogentisate 1,2-dioxygenase of Drosophila melanogaster (Fruit fly).